The chain runs to 232 residues: Floral homeotic protein APETALA 3 (232 aa).

Residues 3–57 (RGKIQIKRIENQTNRQVTYSKRRNGLFKKAHELTVLCDARVSIIMFSSSNKLHEY) enclose the MADS-box domain. Residues 75 to 164 (SDVDVWATQY…KSQQDIQKNL (90 aa)) are a coiled coil. Residues 84–174 (YERMQETKRK…IHELELRAED (91 aa)) form the K-box domain.

In terms of assembly, forms a heterodimer with PISTILLATA, capable of binding to CArG-box sequences. AP3/PI heterodimer binds AP1 or SEP3 to form complexes. In terms of tissue distribution, expressed in petals and stamens.

Its subcellular location is the nucleus. Probable transcription factor involved in the genetic control of flower development. Is required for normal development of petals and stamens in the wild-type flower. Forms a heterodimer with PISTILLATA that is required for autoregulation of both AP3 and PI genes. AP3/PI heterodimer interacts with APETALA1 or SEPALLATA3 to form a ternary complex that could be responsible for the regulation of the genes involved in the flower development. AP3/PI heterodimer activates the expression of NAP. AP3/PI prevents GATA22/GNL and GATA21/GNC expression. This Arabidopsis thaliana (Mouse-ear cress) protein is Floral homeotic protein APETALA 3 (AP3).